The chain runs to 622 residues: Polymerase acidic protein (622 aa).

Belongs to the influenza viruses PA family. RNA polymerase is composed of three subunits: PA, PB1 and PB2.

It localises to the virion. The protein localises to the host nucleus. Functionally, subunit of the RNA-dependent RNA polymerase which is responsible for replication and transcription of virus RNA segments. The transcription of viral mRNAs occurs by a unique mechanism called cap-snatching. 5' methylated caps of cellular mRNAs are cleaved after 10-13 nucleotides by PA. In turn, these short capped RNAs are used as primers by PB1 for transcription of viral mRNAs. During virus replication, PB1 initiates RNA synthesis and copy vRNA into complementary RNA (cRNA) which in turn serves as a template for the production of more vRNAs. The sequence is that of Polymerase acidic protein from Thogoto virus (isolate SiAr 126) (Tho).